Here is a 586-residue protein sequence, read N- to C-terminus: Regulatory protein NPR3 (586 aa).

Residue serine 10 is modified to Phosphoserine. Residues 60-135 form the BTB domain; that stretch reads SDAEIIVDGV…IYTGRLKPFP (76 aa). The C2HC NPR-type zinc-finger motif lies at 138–152; sequence VSTCVDPVCSHDCCR. Cysteine 141, cysteine 146, histidine 148, and cysteine 151 together coordinate Zn(2+). ANK repeat units follow at residues 261–291, 293–320, and 324–353; these read ERIG…TLDQ, NGLH…DVNY, and RGYT…NASE. The segment at 383 to 523 is salicylic acid-binding core (SBC); it reads ESSKARLCID…MAEYIDDDIL (141 aa). Arginine 428 is a binding site for salicylate. A disordered region spans residues 554 to 586; it reads YSKDKESKIARSCLSASSSPSSSSIRDDLHNTT. Residues 565-577 are compositionally biased toward low complexity; sequence SCLSASSSPSSSS.

The protein belongs to the plant 'ANKYRIN-BTB/POZ' family. 'NPR1-like' subfamily. Forms homodimers and heterodimers with NPR4 in the presence of salicylic acid (SA). Interacts with TGA2, TGA3, TGA5 and TGA6. Interacts with CUL3A, a core component of the cullin-RING ubiquitin ligases (CRL). Interacts with TGA2 in vivo in the nucleus. Binds to NPR1; this interaction is promoted by association with SA, probably due to conformational changes.

It is found in the nucleus. It functions in the pathway protein modification; protein ubiquitination. In terms of biological role, salicylic acid (SA)-binding substrate-specific adapter of an E3 ubiquitin-protein ligase complex (CUL3-RBX1-BTB) which mediates the ubiquitination and subsequent proteasomal degradation of NPR1 in response to SA. Together with NPR4, acts as receptor of salicylic acid to monitor immunity in a NPR1-dependent manner and induce systemic acquired resistance (SAR). Involved in the regulation of basal defense responses against pathogens, and may be implicated in the cross-talk between the SA- and JA-dependent signaling pathways. This is Regulatory protein NPR3 from Arabidopsis thaliana (Mouse-ear cress).